The primary structure comprises 385 residues: MAFRKSNVYLSLVNSYTIDSPQPSSINYWWKMGSLLGLCLVIQIVTGIFMAMHYSSNIELAFSSVEHIMRDVHSGYILRYLHANGASFFFMVMFMHMAKGLYYGSYRSPRVTLWNVGVIIFILTIATAFLGYCCVYGQMSHWGATVITNLFSAIPFVGNDIVSWLWGGFSVSNPTIQRFFALHYLVPFIIAAMVIMHLMALHIHGSSNPLGITGNLDRIPMHSYFIFKDLVTVFLFMLILALFVFYSPNTLGHPDNYIPGNPLVTPASIVPEWYLLPFYAILRSIPDKLLGVITMFAAILVLLVLPFTDRSVVRGNTFKVLSKFFFFIFVFNFVLLGQIGACHVEVPYVLMGQIATFIYFAYFLIIVPVISTIENVLFYIGRVNK.

Transmembrane regions (helical) follow at residues M32–M52, Y76–A98, L113–C133, and F179–M199. Heme b contacts are provided by H82 and H96. Heme b is bound by residues H183 and H197. Residue H202 participates in a ubiquinone binding. Transmembrane regions (helical) follow at residues F225–F245, L289–D309, L321–A341, and Y348–P368.

The protein belongs to the cytochrome b family. In terms of assembly, fungal cytochrome b-c1 complex contains 10 subunits; 3 respiratory subunits, 2 core proteins and 5 low-molecular weight proteins. Cytochrome b-c1 complex is a homodimer. Heme b is required as a cofactor.

Its subcellular location is the mitochondrion inner membrane. Its function is as follows. Component of the ubiquinol-cytochrome c reductase complex (complex III or cytochrome b-c1 complex) that is part of the mitochondrial respiratory chain. The b-c1 complex mediates electron transfer from ubiquinol to cytochrome c. Contributes to the generation of a proton gradient across the mitochondrial membrane that is then used for ATP synthesis. The protein is Cytochrome b (COB) of Saccharomyces paradoxus (Yeast).